The chain runs to 273 residues: N-alpha-acetyltransferase 30 (273 aa).

Disordered stretches follow at residues 1-39 (MADAPSGPSVLSHYPGAGLAGEQQREEERHKGCHHHQLN) and 62-85 (QKTRKDSGLVQPQGRTDTRAPNGL). Residues 125 to 273 (RYVRYESELQ…DALRLKLWLR (149 aa)) enclose the N-acetyltransferase domain.

This sequence belongs to the acetyltransferase family. MAK3 subfamily. Component of the N-terminal acetyltransferase C (NatC) complex.

The protein localises to the cytoplasm. The protein resides in the nucleus. It carries out the reaction N-terminal L-methionyl-L-leucyl-[protein] + acetyl-CoA = N-terminal N(alpha)-acetyl-L-methionyl-L-leucyl-[protein] + CoA + H(+). The catalysed reaction is N-terminal L-methionyl-L-isoleucyl-[protein] + acetyl-CoA = N-terminal N(alpha)-acetyl-L-methionyl-L-isoleucyl-[protein] + CoA + H(+). It catalyses the reaction N-terminal L-methionyl-L-phenylalanyl-[protein] + acetyl-CoA = N-terminal N(alpha)-acetyl-L-methionyl-L-phenylalanyl-[protein] + CoA + H(+). The enzyme catalyses N-terminal L-methionyl-L-tryptophyl-[protein] + acetyl-CoA = N-terminal N(alpha)-acetyl-L-methionyl-L-tryptophyl-[protein] + CoA + H(+). It carries out the reaction N-terminal L-methionyl-L-tyrosyl-[protein] + acetyl-CoA = N-terminal N(alpha)-acetyl-L-methionyl-L-tyrosyl-[protein] + CoA + H(+). Catalytic subunit of the N-terminal acetyltransferase C (NatC) complex. Catalyzes acetylation of the N-terminal methionine residues of peptides beginning with Met-Leu-Ala and Met-Leu-Gly. N-terminal acetylation protects proteins from ubiquitination and degradation by the N-end rule pathway. The chain is N-alpha-acetyltransferase 30 (naa30) from Xenopus laevis (African clawed frog).